The primary structure comprises 1345 residues: DNA-directed RNA polymerase subunit beta (1345 aa).

It belongs to the RNA polymerase beta chain family. The RNAP catalytic core consists of 2 alpha, 1 beta, 1 beta' and 1 omega subunit. When a sigma factor is associated with the core the holoenzyme is formed, which can initiate transcription.

It carries out the reaction RNA(n) + a ribonucleoside 5'-triphosphate = RNA(n+1) + diphosphate. Its function is as follows. DNA-dependent RNA polymerase catalyzes the transcription of DNA into RNA using the four ribonucleoside triphosphates as substrates. The sequence is that of DNA-directed RNA polymerase subunit beta from Shewanella oneidensis (strain ATCC 700550 / JCM 31522 / CIP 106686 / LMG 19005 / NCIMB 14063 / MR-1).